We begin with the raw amino-acid sequence, 362 residues long: Putative membrane-bound acyltransferase YfiQ (362 aa).

10 consecutive transmembrane segments (helical) span residues 11-31 (CISC…MLQA), 44-64 (FRTL…FLLA), 82-102 (VIFV…TSAM), 119-139 (VFLG…YMLH), 153-173 (WVLS…SAAS), 181-201 (GGAF…FCLA), 220-240 (WVVY…SYVG), 252-267 (IMLY…FHLF), 283-303 (YSFS…VLLL), and 308-328 (IPAV…PIMT).

It belongs to the acyltransferase 3 family.

Its subcellular location is the cell membrane. This Bacillus subtilis (strain 168) protein is Putative membrane-bound acyltransferase YfiQ (yfiQ).